We begin with the raw amino-acid sequence, 137 residues long: Peptide methionine sulfoxide reductase MsrB (137 aa).

In terms of domain architecture, MsrB spans 7-129; it reads PEELKNGLSE…NSASLSFTDE (123 aa). Residues Cys-46, Cys-49, Cys-95, and Cys-98 each coordinate Zn(2+). Cys-118 acts as the Nucleophile in catalysis.

Belongs to the MsrB Met sulfoxide reductase family. Requires Zn(2+) as cofactor.

It catalyses the reaction L-methionyl-[protein] + [thioredoxin]-disulfide + H2O = L-methionyl-(R)-S-oxide-[protein] + [thioredoxin]-dithiol. This is Peptide methionine sulfoxide reductase MsrB from Klebsiella pneumoniae subsp. pneumoniae (strain ATCC 700721 / MGH 78578).